A 411-amino-acid chain; its full sequence is Bestrophin homolog 26 (411 aa).

4 helical membrane-spanning segments follow: residues 30 to 50 (FTAIFKELCLFLGLYFLFMVI), 73 to 93 (SHQEFTIPLEFLLGFFVSSVV), 235 to 255 (IPIPLAYPQAVFLAVRCYFAV), and 272 to 292 (TWITFFPVLTTFQYIFMMGWM).

The protein belongs to the anion channel-forming bestrophin (TC 1.A.46) family. Calcium-sensitive chloride channel subfamily. In terms of assembly, forms oligomers.

The protein resides in the cell membrane. Functionally, forms chloride channels. The sequence is that of Bestrophin homolog 26 (best-26) from Caenorhabditis elegans.